The chain runs to 484 residues: tRNA sulfurtransferase (484 aa).

The THUMP domain occupies 63–167; that stretch reads QAFGERLACI…GDKLYMVTKR (105 aa). Residues 185–186, Lys-267, Gly-289, and Gln-298 each bind ATP; that span reads LI. An intrachain disulfide couples Cys-346 to Cys-458. The region spanning 406 to 484 is the Rhodanese domain; that stretch reads IDTNEVVIDI…GYHNVKVYRP (79 aa). Cys-458 serves as the catalytic Cysteine persulfide intermediate.

The protein belongs to the ThiI family.

It localises to the cytoplasm. The enzyme catalyses [ThiI sulfur-carrier protein]-S-sulfanyl-L-cysteine + a uridine in tRNA + 2 reduced [2Fe-2S]-[ferredoxin] + ATP + H(+) = [ThiI sulfur-carrier protein]-L-cysteine + a 4-thiouridine in tRNA + 2 oxidized [2Fe-2S]-[ferredoxin] + AMP + diphosphate. The catalysed reaction is [ThiS sulfur-carrier protein]-C-terminal Gly-Gly-AMP + S-sulfanyl-L-cysteinyl-[cysteine desulfurase] + AH2 = [ThiS sulfur-carrier protein]-C-terminal-Gly-aminoethanethioate + L-cysteinyl-[cysteine desulfurase] + A + AMP + 2 H(+). It functions in the pathway cofactor biosynthesis; thiamine diphosphate biosynthesis. Its function is as follows. Catalyzes the ATP-dependent transfer of a sulfur to tRNA to produce 4-thiouridine in position 8 of tRNAs, which functions as a near-UV photosensor. Also catalyzes the transfer of sulfur to the sulfur carrier protein ThiS, forming ThiS-thiocarboxylate. This is a step in the synthesis of thiazole, in the thiamine biosynthesis pathway. The sulfur is donated as persulfide by IscS. The polypeptide is tRNA sulfurtransferase (Shewanella sp. (strain MR-7)).